The chain runs to 380 residues: O-methyltransferase ucdC (380 aa).

S-adenosyl-L-methionine contacts are provided by residues 222–223 (GG), aspartate 247, and arginine 283. Histidine 287 functions as the Proton acceptor in the catalytic mechanism.

Belongs to the class I-like SAM-binding methyltransferase superfamily. Cation-independent O-methyltransferase family. COMT subfamily.

The protein operates within secondary metabolite biosynthesis. Nonribosomal peptide synthetase that mediates the biosynthesis of usterphenyllins and uscandidusins, p-terphenyl derivatives. Within the pathway, ucdC catalyzes O-methylation of the terphenyl triol intermediate produced by ucdB to yield terphenyllin carrying two methoxy moieties at C-9 and C-12. The pathway begin with the biosynthesis of 4-hydroxyphenylpyruvate (HPPA) from L-tyrosine, possibly by the aminotransferase ucdG. The nonribosomal peptide synthetase ucdA then condenses two HPPA units to produce atromentin. The key step in this pathway is the reduction and dehydration of atromentin to form a terphenyl triol intermediate, performed by the NAD-dependent dehydrogenase ucdB. Further O-methylation by the methyltransferase ucdC forms terphenyllin carrying two methoxy moieties at C-9 and C-12, and subsequent dihydroxylation at C-3 of ring A and C-15 of ring C by the flavin-dependent oxygenase ucdD leads to 3,15-dihydroxyterphenyllin. Prenylation by ucdE at position C-5 of ring A forms usterphenyllin B, and is followed by a second prenylation at position C-14 of ring C to form usterphenyllin A. The following furan ring formation that leads to uscandidusins A and B was proven to be an unexpected spontaneous non-enzymatic reaction. This is O-methyltransferase ucdC from Aspergillus ustus.